A 171-amino-acid chain; its full sequence is Acetyltransferase PA2271 (171 aa).

An N-acetyltransferase domain is found at 3–162 (YRIRTSRDED…HEQEIGFAAD (160 aa)). CoA-binding positions include 84–86 (LSI) and 128–130 (PFY).

Functionally, catalyzes the transfer of an acetyl group from acetyl coenzyme A (AcCoA) to an acceptor substrate and releases both CoA and the acetylated product. It can use a variety of substrates including spermidine, spermine and N(8)-acetylspermidine, 7-aminocephalosporanic acid, colistin and thiamine. In Pseudomonas aeruginosa (strain ATCC 15692 / DSM 22644 / CIP 104116 / JCM 14847 / LMG 12228 / 1C / PRS 101 / PAO1), this protein is Acetyltransferase PA2271.